Here is a 98-residue protein sequence, read N- to C-terminus: Co-chaperonin GroES (98 aa).

Belongs to the GroES chaperonin family. As to quaternary structure, heptamer of 7 subunits arranged in a ring. Interacts with the chaperonin GroEL.

It is found in the cytoplasm. Its function is as follows. Together with the chaperonin GroEL, plays an essential role in assisting protein folding. The GroEL-GroES system forms a nano-cage that allows encapsulation of the non-native substrate proteins and provides a physical environment optimized to promote and accelerate protein folding. GroES binds to the apical surface of the GroEL ring, thereby capping the opening of the GroEL channel. This chain is Co-chaperonin GroES, found in Renibacterium salmoninarum (strain ATCC 33209 / DSM 20767 / JCM 11484 / NBRC 15589 / NCIMB 2235).